A 452-amino-acid chain; its full sequence is Pup--protein ligase (452 aa).

Mg(2+) is bound at residue Glu9. Arg53 is a binding site for ATP. Tyr55 is a Mg(2+) binding site. The active-site Proton acceptor is the Asp57. Glu63 is a binding site for Mg(2+). Residues Thr66 and Trp419 each contribute to the ATP site.

The protein belongs to the Pup ligase/Pup deamidase family. Pup-conjugating enzyme subfamily.

The enzyme catalyses ATP + [prokaryotic ubiquitin-like protein]-L-glutamate + [protein]-L-lysine = ADP + phosphate + N(6)-([prokaryotic ubiquitin-like protein]-gamma-L-glutamyl)-[protein]-L-lysine.. The protein operates within protein degradation; proteasomal Pup-dependent pathway. It functions in the pathway protein modification; protein pupylation. Catalyzes the covalent attachment of the prokaryotic ubiquitin-like protein modifier Pup to the proteasomal substrate proteins, thereby targeting them for proteasomal degradation. This tagging system is termed pupylation. The ligation reaction involves the side-chain carboxylate of the C-terminal glutamate of Pup and the side-chain amino group of a substrate lysine. This Thermobifida fusca (strain YX) protein is Pup--protein ligase.